The sequence spans 187 residues: Transcription antitermination protein NusB (187 aa).

A disordered region spans residues 135 to 187; that stretch reads APAPESVAEEADEESSDSDAAASDPTDEGDVSDSSGASDEPAAPSAEIQPTVD. The segment covering 141 to 151 has biased composition (acidic residues); that stretch reads VAEEADEESSD.

Belongs to the NusB family.

In terms of biological role, involved in transcription antitermination. Required for transcription of ribosomal RNA (rRNA) genes. Binds specifically to the boxA antiterminator sequence of the ribosomal RNA (rrn) operons. The protein is Transcription antitermination protein NusB of Bifidobacterium longum subsp. infantis (strain ATCC 15697 / DSM 20088 / JCM 1222 / NCTC 11817 / S12).